The chain runs to 325 residues: MAVSDRKLQLLDFEKPLAELEDRIEQIRSLSEQNGVDVTDQIAQLEGRAEQLRQEIFSSLTPMQELQLARHPRRPSTLDYIHAISDEWMELHGDRRGYDDPAIVGGVGRIGGQPVLMLGHQKGRDTKDNVARNFGMPFPSGYRKAMRLMDHADRFGLPIISFIDTPAAWAGLEAEQFGQGEAIALNLREMFRLDVPIICTVIGEGGSGGALGIGVGDRLLMFEHSIYSVAPPEACAAILWRDAQEGPQAAEALKITATDLQELGIIDQILPEPPGGAHVNPIKAANIIKTAILSNLEELWRLSPQERRQQRYHKFRNMGIFSQLP.

The CoA carboxyltransferase C-terminal domain occupies 44 to 298 (QLEGRAEQLR…KTAILSNLEE (255 aa)).

It belongs to the AccA family. As to quaternary structure, acetyl-CoA carboxylase is a heterohexamer composed of biotin carboxyl carrier protein (AccB), biotin carboxylase (AccC) and two subunits each of ACCase subunit alpha (AccA) and ACCase subunit beta (AccD).

The protein localises to the cytoplasm. It catalyses the reaction N(6)-carboxybiotinyl-L-lysyl-[protein] + acetyl-CoA = N(6)-biotinyl-L-lysyl-[protein] + malonyl-CoA. The protein operates within lipid metabolism; malonyl-CoA biosynthesis; malonyl-CoA from acetyl-CoA: step 1/1. Component of the acetyl coenzyme A carboxylase (ACC) complex. First, biotin carboxylase catalyzes the carboxylation of biotin on its carrier protein (BCCP) and then the CO(2) group is transferred by the carboxyltransferase to acetyl-CoA to form malonyl-CoA. The polypeptide is Acetyl-coenzyme A carboxylase carboxyl transferase subunit alpha (Acaryochloris marina (strain MBIC 11017)).